Here is a 276-residue protein sequence, read N- to C-terminus: NADPH-dependent 7-cyano-7-deazaguanine reductase (276 aa).

83–85 (IES) contributes to the substrate binding site. Position 85 to 86 (85 to 86 (SK)) interacts with NADPH. Residue C184 is the Thioimide intermediate of the active site. D191 serves as the catalytic Proton donor. Position 223–224 (223–224 (HE)) interacts with substrate. 252–253 (RG) lines the NADPH pocket.

The protein belongs to the GTP cyclohydrolase I family. QueF type 2 subfamily. In terms of assembly, homodimer.

It is found in the cytoplasm. It catalyses the reaction 7-aminomethyl-7-carbaguanine + 2 NADP(+) = 7-cyano-7-deazaguanine + 2 NADPH + 3 H(+). Its pathway is tRNA modification; tRNA-queuosine biosynthesis. Functionally, catalyzes the NADPH-dependent reduction of 7-cyano-7-deazaguanine (preQ0) to 7-aminomethyl-7-deazaguanine (preQ1). This chain is NADPH-dependent 7-cyano-7-deazaguanine reductase, found in Pseudomonas putida (strain ATCC 700007 / DSM 6899 / JCM 31910 / BCRC 17059 / LMG 24140 / F1).